The sequence spans 256 residues: Homeobox protein Hox-D13a (256 aa).

Positions 191–250 (GRKKRVPYTKFQLKELEREYNTTKFITKENRRRIASSTNLSERQVTIWFQNRRVKDKKRP) form a DNA-binding region, homeobox.

This sequence belongs to the Abd-B homeobox family.

It is found in the nucleus. Sequence-specific transcription factor which is part of a developmental regulatory system that provides cells with specific positional identities on the anterior-posterior axis. The polypeptide is Homeobox protein Hox-D13a (hoxd13a) (Danio rerio (Zebrafish)).